The sequence spans 496 residues: L-arabinose isomerase (496 aa).

Mn(2+) contacts are provided by glutamate 302, glutamate 329, histidine 346, and histidine 445.

It belongs to the arabinose isomerase family. Requires Mn(2+) as cofactor.

The catalysed reaction is beta-L-arabinopyranose = L-ribulose. It participates in carbohydrate degradation; L-arabinose degradation via L-ribulose; D-xylulose 5-phosphate from L-arabinose (bacterial route): step 1/3. Its function is as follows. Catalyzes the conversion of L-arabinose to L-ribulose. The polypeptide is L-arabinose isomerase (Thermotoga petrophila (strain ATCC BAA-488 / DSM 13995 / JCM 10881 / RKU-1)).